Here is a 105-residue protein sequence, read N- to C-terminus: Insulin-like peptide 7 (105 aa).

A signal peptide spans 1–18 (MPPIILVFFLVLIPASQQ). The propeptide occupies 19–57 (YPFSLESLNDQIINEEVIEYMLENSIRSSRTRRVPDEKK). Intrachain disulfides connect cysteine 61–cysteine 90, cysteine 73–cysteine 103, cysteine 77–cysteine 104, and cysteine 89–cysteine 94.

It belongs to the insulin family.

It is found in the secreted. Insulin-like peptide which plays a role in ageing as a consequence of daf-16 activity. The protein is Insulin-like peptide 7 of Caenorhabditis elegans.